A 372-amino-acid chain; its full sequence is Lipoyl synthase, mitochondrial (372 aa).

Positions 103, 108, 114, 134, 138, 141, and 349 each coordinate [4Fe-4S] cluster. In terms of domain architecture, Radical SAM core spans 119 to 338; it reads EHGTQTATIM…EERGNQLGFL (220 aa).

This sequence belongs to the radical SAM superfamily. Lipoyl synthase family. Requires [4Fe-4S] cluster as cofactor.

It is found in the mitochondrion. It catalyses the reaction [[Fe-S] cluster scaffold protein carrying a second [4Fe-4S](2+) cluster] + N(6)-octanoyl-L-lysyl-[protein] + 2 oxidized [2Fe-2S]-[ferredoxin] + 2 S-adenosyl-L-methionine + 4 H(+) = [[Fe-S] cluster scaffold protein] + N(6)-[(R)-dihydrolipoyl]-L-lysyl-[protein] + 4 Fe(3+) + 2 hydrogen sulfide + 2 5'-deoxyadenosine + 2 L-methionine + 2 reduced [2Fe-2S]-[ferredoxin]. It participates in protein modification; protein lipoylation via endogenous pathway; protein N(6)-(lipoyl)lysine from octanoyl-[acyl-carrier-protein]: step 2/2. In terms of biological role, catalyzes the radical-mediated insertion of two sulfur atoms into the C-6 and C-8 positions of the octanoyl moiety bound to the lipoyl domains of lipoate-dependent enzymes, thereby converting the octanoylated domains into lipoylated derivatives. This Drosophila willistoni (Fruit fly) protein is Lipoyl synthase, mitochondrial.